Here is a 185-residue protein sequence, read N- to C-terminus: Ribosome-recycling factor (185 aa).

The protein belongs to the RRF family.

It localises to the cytoplasm. Its function is as follows. Responsible for the release of ribosomes from messenger RNA at the termination of protein biosynthesis. May increase the efficiency of translation by recycling ribosomes from one round of translation to another. The polypeptide is Ribosome-recycling factor (Yersinia enterocolitica serotype O:8 / biotype 1B (strain NCTC 13174 / 8081)).